The following is a 506-amino-acid chain: Protein CYCLOPS (506 aa).

Disordered regions lie at residues 193-223 (TVNSAPMSNTPSQTPTFVSPSSSSTSPLDNP) and 385-434 (KENL…RSST). The span at 202–219 (TPSQTPTFVSPSSSSTSP) shows a compositional bias: low complexity. A compositionally biased stretch (basic and acidic residues) spans 385–394 (KENLKDDRKK). A Nuclear localization signal motif is present at residues 415-418 (KKRR). Over residues 422 to 432 (SRKMAEAKERS) the composition is skewed to basic and acidic residues. A coiled-coil region spans residues 441–506 (IQVVLKRCET…IERIVSDTNT (66 aa)).

Belongs to the CYCLOPS family. In terms of tissue distribution, highly epressed in roots. Expressed at very low levels in leaves, stems and panicles.

It localises to the nucleus. Functionally, involved in arbuscular mycorrhizal (AM) symbiosis. Required for fungal infection in roots and arbuscule development during AM symbiosis. This is Protein CYCLOPS from Oryza sativa subsp. japonica (Rice).